We begin with the raw amino-acid sequence, 187 residues long: Large ribosomal subunit protein uL22 (187 aa).

This sequence belongs to the universal ribosomal protein uL22 family.

This Theileria annulata protein is Large ribosomal subunit protein uL22 (RPL17).